The following is a 441-amino-acid chain: Glutamyl-tRNA reductase (441 aa).

Residues 49 to 52 (TCNR), Ser-109, 114 to 116 (EGQ), and Gln-120 contribute to the substrate site. The active-site Nucleophile is the Cys-50. Position 198-203 (198-203 (GAGRMS)) interacts with NADP(+).

Belongs to the glutamyl-tRNA reductase family. In terms of assembly, homodimer.

The enzyme catalyses (S)-4-amino-5-oxopentanoate + tRNA(Glu) + NADP(+) = L-glutamyl-tRNA(Glu) + NADPH + H(+). The protein operates within porphyrin-containing compound metabolism; protoporphyrin-IX biosynthesis; 5-aminolevulinate from L-glutamyl-tRNA(Glu): step 1/2. Its pathway is porphyrin-containing compound metabolism; chlorophyll biosynthesis. In terms of biological role, catalyzes the NADPH-dependent reduction of glutamyl-tRNA(Glu) to glutamate 1-semialdehyde (GSA). This Prochlorococcus marinus (strain NATL2A) protein is Glutamyl-tRNA reductase.